The following is a 519-amino-acid chain: Sensor protein RprX (519 aa).

The next 2 helical transmembrane spans lie at 5-25 and 260-280; these read TIWI…YLQV and IPSM…IYIV. One can recognise a Histidine kinase domain in the interval 296–517; sequence NMTHEFKTPI…KFIIALPLLK (222 aa). A Phosphohistidine; by autocatalysis modification is found at His299.

It is found in the cell membrane. The enzyme catalyses ATP + protein L-histidine = ADP + protein N-phospho-L-histidine.. Functionally, member of the two-component regulatory system RprX/RprY. May activate RprY by phosphorylation. The sequence is that of Sensor protein RprX (rprX) from Bacteroides fragilis (strain YCH46).